Reading from the N-terminus, the 99-residue chain is Small ribosomal subunit protein uS14c (99 aa).

Positions 46–66 are disordered; that stretch reads LQSSPRNSAPTRLHRRCSSTG.

The protein belongs to the universal ribosomal protein uS14 family. As to quaternary structure, part of the 30S ribosomal subunit.

The protein localises to the plastid. It localises to the chloroplast. Its function is as follows. Binds 16S rRNA, required for the assembly of 30S particles. The sequence is that of Small ribosomal subunit protein uS14c from Pinus thunbergii (Japanese black pine).